We begin with the raw amino-acid sequence, 311 residues long: DNA repair and recombination protein RadA (311 aa).

Position 104-111 (104-111 (GEFGSGKS)) interacts with ATP.

This sequence belongs to the eukaryotic RecA-like protein family.

In terms of biological role, involved in DNA repair and in homologous recombination. Binds and assemble on single-stranded DNA to form a nucleoprotein filament. Hydrolyzes ATP in a ssDNA-dependent manner and promotes DNA strand exchange between homologous DNA molecules. This is DNA repair and recombination protein RadA from Methanosphaera stadtmanae (strain ATCC 43021 / DSM 3091 / JCM 11832 / MCB-3).